The sequence spans 330 residues: Complement factor H-related protein 3 (330 aa).

The N-terminal stretch at 1–18 (MLLLINVILTLWVSCANG) is a signal peptide. 5 Sushi domains span residues 22-84 (PCDF…VPCL), 85-142 (RKCY…RCIR), 144-205 (RTCS…ICIN), 208-266 (EKCG…RCIH), and 267-330 (PCII…PRCE). Disulfide bonds link Cys23/Cys72, Cys55/Cys83, Cys87/Cys129, Cys114/Cys140, Cys146/Cys192, and Cys175/Cys203. A glycan (N-linked (GlcNAc...) asparagine) is linked at Asn108. N-linked (GlcNAc...) asparagine glycosylation is found at Asn185 and Asn205. Cystine bridges form between Cys210/Cys253, Cys239/Cys264, Cys268/Cys319, and Cys302/Cys329. Residue Asn309 is glycosylated (N-linked (GlcNAc...) asparagine).

As to expression, expressed by the liver and secreted in plasma.

The protein localises to the secreted. Functionally, might be involved in complement regulation. This chain is Complement factor H-related protein 3 (CFHR3), found in Homo sapiens (Human).